Consider the following 477-residue polypeptide: MTQIELSCSAVHIIGAGLAGSEAAWQVANHGVRVVLHEMRPHRMTAAHQTGGLAELVCSNSFRSDDAANNAVGLLHAEMRRLGSLIMRCADANQVPAGGALAVDRDGFSSAVTKALDDHPLIEINRTEVDGLPPADWRNVIVATGPLTSAPLAAAIRALTDESALAFFDAIAPIVHRDSIDMSKAWFQSRYDKVGPGGTGADYINCPMTEAQYHAFVDALIEGEKVDFKDWEIDTPYFDGCLPIEIMAERGRETLRHGPMKPVGLTNPHDPTVKPYAIVQLRQDNRLGTLYNIVGFQTKLKHGAQTRVFRTIPGLETAEFARLGGLHRNTFLNSPKLLDTQLRLRAEPRLRFAGQMTGCEGYVESAAIGLIAGLYAASDARARSLAAPPPTTALGALLGHITGGHIESIDAGPRSFQPMNINFGLFPPLANPPAKKPDGTRLRGNEKTIAKKQAISARALADLDRWIADALRVAAAA.

15–20 (GAGLAG) contributes to the FAD binding site.

It belongs to the MnmG family. TrmFO subfamily. FAD serves as cofactor.

It localises to the cytoplasm. It carries out the reaction uridine(54) in tRNA + (6R)-5,10-methylene-5,6,7,8-tetrahydrofolate + NADH + H(+) = 5-methyluridine(54) in tRNA + (6S)-5,6,7,8-tetrahydrofolate + NAD(+). It catalyses the reaction uridine(54) in tRNA + (6R)-5,10-methylene-5,6,7,8-tetrahydrofolate + NADPH + H(+) = 5-methyluridine(54) in tRNA + (6S)-5,6,7,8-tetrahydrofolate + NADP(+). Catalyzes the folate-dependent formation of 5-methyl-uridine at position 54 (M-5-U54) in all tRNAs. This Nitrobacter hamburgensis (strain DSM 10229 / NCIMB 13809 / X14) protein is Methylenetetrahydrofolate--tRNA-(uracil-5-)-methyltransferase TrmFO.